Reading from the N-terminus, the 279-residue chain is Diaminopimelate epimerase (279 aa).

Positions 12, 45, and 65 each coordinate substrate. Cys-74 functions as the Proton donor in the catalytic mechanism. Substrate contacts are provided by residues 75 to 76 (GN), Asn-162, Asn-195, and 213 to 214 (ER). Residue Cys-222 is the Proton acceptor of the active site. Residue 223–224 (GT) participates in substrate binding.

This sequence belongs to the diaminopimelate epimerase family. Homodimer.

Its subcellular location is the cytoplasm. It catalyses the reaction (2S,6S)-2,6-diaminopimelate = meso-2,6-diaminopimelate. It functions in the pathway amino-acid biosynthesis; L-lysine biosynthesis via DAP pathway; DL-2,6-diaminopimelate from LL-2,6-diaminopimelate: step 1/1. Catalyzes the stereoinversion of LL-2,6-diaminopimelate (L,L-DAP) to meso-diaminopimelate (meso-DAP), a precursor of L-lysine and an essential component of the bacterial peptidoglycan. The protein is Diaminopimelate epimerase of Shewanella woodyi (strain ATCC 51908 / MS32).